A 351-amino-acid polypeptide reads, in one-letter code: Synaptonemal complex central element protein 1 (351 aa).

A compositionally biased stretch (polar residues) spans 1 to 10 (MAGRSLTSKA). Disordered stretches follow at residues 1 to 31 (MAGR…TSSQ) and 267 to 351 (KCQQ…KELF). Positions 52–290 (RVEVLINRIN…ELEKHGMQVP (239 aa)) form a coiled coil.

The protein belongs to the SYCE family. Homodimer. Found in a complex with SYCP1 and SYCE2. Interacts with SYCP1, SYCE2 and SYCE3. Interacts with SIX6OS1.

The protein localises to the nucleus. The protein resides in the chromosome. Major component of the transverse central element of synaptonemal complexes (SCS), formed between homologous chromosomes during meiotic prophase. Requires SYCP1 in order to be incorporated into the central element. May have a role in the synaptonemal complex assembly, stabilization and recombination. This chain is Synaptonemal complex central element protein 1 (SYCE1), found in Homo sapiens (Human).